Consider the following 301-residue polypeptide: Sulfate adenylyltransferase subunit 2 2 (301 aa).

Belongs to the PAPS reductase family. CysD subfamily. As to quaternary structure, heterodimer composed of CysD, the smaller subunit, and CysN.

The enzyme catalyses sulfate + ATP + H(+) = adenosine 5'-phosphosulfate + diphosphate. The protein operates within sulfur metabolism; hydrogen sulfide biosynthesis; sulfite from sulfate: step 1/3. Functionally, with CysN forms the ATP sulfurylase (ATPS) that catalyzes the adenylation of sulfate producing adenosine 5'-phosphosulfate (APS) and diphosphate, the first enzymatic step in sulfur assimilation pathway. APS synthesis involves the formation of a high-energy phosphoric-sulfuric acid anhydride bond driven by GTP hydrolysis by CysN coupled to ATP hydrolysis by CysD. This is Sulfate adenylyltransferase subunit 2 2 from Shewanella sediminis (strain HAW-EB3).